Consider the following 134-residue polypeptide: Small ribosomal subunit protein uS8c (134 aa).

It belongs to the universal ribosomal protein uS8 family. As to quaternary structure, part of the 30S ribosomal subunit.

The protein localises to the plastid. Its subcellular location is the chloroplast. Its function is as follows. One of the primary rRNA binding proteins, it binds directly to 16S rRNA central domain where it helps coordinate assembly of the platform of the 30S subunit. This Populus alba (White poplar) protein is Small ribosomal subunit protein uS8c (rps8).